A 220-amino-acid polypeptide reads, in one-letter code: Large ribosomal subunit protein uL16 (220 aa).

It belongs to the universal ribosomal protein uL16 family. Component of the small ribosomal subunit. Mature ribosomes consist of a small (40S) and a large (60S) subunit. The 40S subunit contains about 33 different proteins and 1 molecule of RNA (18S). The 60S subunit contains about 49 different proteins and 3 molecules of RNA (25S, 5.8S and 5S).

The chain is Large ribosomal subunit protein uL16 (RPL10) from Euphorbia esula (Leafy spurge).